The sequence spans 799 residues: Cadherin-8 (799 aa).

Positions 1-29 are cleaved as a signal peptide; it reads MPERLAETLLDLWTPLIILWITLPSFVYM. The propeptide occupies 30-61; the sequence is APMNQAHVLTTGSPLELSRQSEEMRILNRSKR. Cadherin domains lie at 62-167, 168-276, 277-391, 392-494, and 495-616; these read GWVW…APEF, LNGP…PPKF, AQSL…PPVF, SSPT…DNAP, and EFAS…YVLP. The Extracellular segment spans residues 62–621; that stretch reads GWVWNQMFVL…PYVLPIGLSM (560 aa). Asn188 is a glycosylation site (N-linked (GlcNAc...) asparagine). Residues Asn463, Asn473, and Asn544 are each glycosylated (N-linked (GlcNAc...) asparagine). Residues 622–642 form a helical membrane-spanning segment; sequence GALIAILACIILLLVIVVLFV. Residues 643-799 are Cytoplasmic-facing; sequence TLRRHKNEPL…YSVGESDKET (157 aa). Phosphoserine is present on Ser795.

It is found in the cell membrane. Cadherins are calcium-dependent cell adhesion proteins. They preferentially interact with themselves in a homophilic manner in connecting cells; cadherins may thus contribute to the sorting of heterogeneous cell types. The protein is Cadherin-8 (Cdh8) of Rattus norvegicus (Rat).